A 210-amino-acid chain; its full sequence is Orotate phosphoribosyltransferase (210 aa).

Residues arginine 94, lysine 98, histidine 100, and 120-128 (EDLISTGGS) contribute to the 5-phospho-alpha-D-ribose 1-diphosphate site. Residue serine 124 coordinates orotate.

Belongs to the purine/pyrimidine phosphoribosyltransferase family. PyrE subfamily. In terms of assembly, homodimer. Requires Mg(2+) as cofactor.

It catalyses the reaction orotidine 5'-phosphate + diphosphate = orotate + 5-phospho-alpha-D-ribose 1-diphosphate. The protein operates within pyrimidine metabolism; UMP biosynthesis via de novo pathway; UMP from orotate: step 1/2. In terms of biological role, catalyzes the transfer of a ribosyl phosphate group from 5-phosphoribose 1-diphosphate to orotate, leading to the formation of orotidine monophosphate (OMP). The protein is Orotate phosphoribosyltransferase of Bacillus cereus (strain ATCC 14579 / DSM 31 / CCUG 7414 / JCM 2152 / NBRC 15305 / NCIMB 9373 / NCTC 2599 / NRRL B-3711).